A 220-amino-acid polypeptide reads, in one-letter code: Octanoyltransferase (220 aa).

The BPL/LPL catalytic domain maps to A36–L212. Substrate is bound by residues R75 to H82, S142 to G144, and G155 to A157. The active-site Acyl-thioester intermediate is the C173.

The protein belongs to the LipB family.

It is found in the cytoplasm. It catalyses the reaction octanoyl-[ACP] + L-lysyl-[protein] = N(6)-octanoyl-L-lysyl-[protein] + holo-[ACP] + H(+). Its pathway is protein modification; protein lipoylation via endogenous pathway; protein N(6)-(lipoyl)lysine from octanoyl-[acyl-carrier-protein]: step 1/2. Functionally, catalyzes the transfer of endogenously produced octanoic acid from octanoyl-acyl-carrier-protein onto the lipoyl domains of lipoate-dependent enzymes. Lipoyl-ACP can also act as a substrate although octanoyl-ACP is likely to be the physiological substrate. The chain is Octanoyltransferase from Chromohalobacter salexigens (strain ATCC BAA-138 / DSM 3043 / CIP 106854 / NCIMB 13768 / 1H11).